The sequence spans 391 residues: 3-ketoacyl-CoA thiolase (391 aa).

Cys-95 functions as the Acyl-thioester intermediate in the catalytic mechanism. Active-site proton acceptor residues include His-347 and Cys-377.

It belongs to the thiolase-like superfamily. Thiolase family. Heterotetramer of two alpha chains (FadB) and two beta chains (FadA).

It is found in the cytoplasm. It catalyses the reaction an acyl-CoA + acetyl-CoA = a 3-oxoacyl-CoA + CoA. It participates in lipid metabolism; fatty acid beta-oxidation. In terms of biological role, catalyzes the final step of fatty acid oxidation in which acetyl-CoA is released and the CoA ester of a fatty acid two carbons shorter is formed. The sequence is that of 3-ketoacyl-CoA thiolase from Pseudomonas syringae pv. tomato (strain ATCC BAA-871 / DC3000).